We begin with the raw amino-acid sequence, 342 residues long: Biotin synthase (342 aa).

In terms of domain architecture, Radical SAM core spans 63–290; the sequence is NTVQLSTLLS…GAMVRLSAGR (228 aa). 3 residues coordinate [4Fe-4S] cluster: Cys78, Cys82, and Cys85. [2Fe-2S] cluster-binding residues include Cys122, Cys153, Cys213, and Arg285.

This sequence belongs to the radical SAM superfamily. Biotin synthase family. Homodimer. [4Fe-4S] cluster is required as a cofactor. Requires [2Fe-2S] cluster as cofactor.

It catalyses the reaction (4R,5S)-dethiobiotin + (sulfur carrier)-SH + 2 reduced [2Fe-2S]-[ferredoxin] + 2 S-adenosyl-L-methionine = (sulfur carrier)-H + biotin + 2 5'-deoxyadenosine + 2 L-methionine + 2 oxidized [2Fe-2S]-[ferredoxin]. It functions in the pathway cofactor biosynthesis; biotin biosynthesis; biotin from 7,8-diaminononanoate: step 2/2. In terms of biological role, catalyzes the conversion of dethiobiotin (DTB) to biotin by the insertion of a sulfur atom into dethiobiotin via a radical-based mechanism. In Cupriavidus pinatubonensis (strain JMP 134 / LMG 1197) (Cupriavidus necator (strain JMP 134)), this protein is Biotin synthase.